A 614-amino-acid chain; its full sequence is MATATLTLFLGLLALTSTILSFNADARPQPSDEDLGTIIGPHQTSFDDEIGIVIGPHATVDDEDIDMDMGTTVGPQTNLNDDDLGTIIGPEFEIHKQDFPADFIFGTSVSAYQVEGAKKGSGRGLTSWDEFTHMFPEKVQQNGDGDEGVDFYTRYKDDIKLMKELNTNGFRFSISWTRILPYGTIKKGVNEEGVKFYNDLINELLANGIQPSVTLFHWESPLALEMEYGGFLNERIVEDFREFANFCFKEFGDRVKNWATFNEPSVYSVAGYSKGKKAPGRCSKWQAPKCPTGDSSEEPYIVAHNQILAHLAAVDEFRNCKKVEGGGKIGIVLVSHWFEPKDPNSSEDVKAARRSLEYQLGWFLRPLTYGQYPAEMLEDVNIRLREFTPEESEKLRKSLDFVGLNYYGAFFSTPLAKVNSSQLNYETDLRVNWTVITNNLSLPDLQTTSMGIVIYPAGLKNILKHIKDEYMDPEIYIMENGMDEIDYGTKNITEATNDYGRKEFIKSHILIMGKSIRMDKVRLKGYYIWSLMDNFEWDKGYKVRFGLYYVDYNDNMKRYIRSSGKWLSEFLDSKETLHKCYFEGHREKGYAPKLFDVEYLEPENSQLSYRSDFM.

Positions 1 to 26 (MATATLTLFLGLLALTSTILSFNADA) are cleaved as a signal peptide. A beta-D-glucoside contacts are provided by residues glutamine 113, histidine 217, and 262 to 263 (NE). The active-site Proton donor is glutamate 263. Cysteines 282 and 290 form a disulfide. A glycan (N-linked (GlcNAc...) asparagine) is linked at asparagine 344. Tyrosine 407 provides a ligand contact to a beta-D-glucoside. Residues asparagine 419, asparagine 432, and asparagine 439 are each glycosylated (N-linked (GlcNAc...) asparagine). Glutamate 479 serves as a coordination point for a beta-D-glucoside. Glutamate 479 (nucleophile) is an active-site residue. Asparagine 491 carries an N-linked (GlcNAc...) asparagine glycan. A beta-D-glucoside is bound by residues tryptophan 529, 536–537 (EW), and phenylalanine 545.

It belongs to the glycosyl hydrolase 1 family.

The catalysed reaction is Hydrolysis of terminal, non-reducing beta-D-glucosyl residues with release of beta-D-glucose.. The polypeptide is Beta-glucosidase 33 (Arabidopsis thaliana (Mouse-ear cress)).